A 297-amino-acid polypeptide reads, in one-letter code: UDP-N-acetylenolpyruvoylglucosamine reductase (297 aa).

Residues 27–191 (TGGNADIFVM…LDATFSLELE (165 aa)) form the FAD-binding PCMH-type domain. Arg170 is an active-site residue. The active-site Proton donor is the Ser220. Glu290 is an active-site residue.

This sequence belongs to the MurB family. FAD is required as a cofactor.

It localises to the cytoplasm. It carries out the reaction UDP-N-acetyl-alpha-D-muramate + NADP(+) = UDP-N-acetyl-3-O-(1-carboxyvinyl)-alpha-D-glucosamine + NADPH + H(+). It participates in cell wall biogenesis; peptidoglycan biosynthesis. Cell wall formation. This is UDP-N-acetylenolpyruvoylglucosamine reductase from Listeria welshimeri serovar 6b (strain ATCC 35897 / DSM 20650 / CCUG 15529 / CIP 8149 / NCTC 11857 / SLCC 5334 / V8).